The chain runs to 685 residues: UvrABC system protein C (685 aa).

The 79-residue stretch at 15-93 (ALPGVYRYFD…IKTQNPRFNI (79 aa)) folds into the GIY-YIG domain. Residues 214–249 (QELLQAMEARMMAYSGQLAFEQAAEVRNQMQALSRV) enclose the UVR domain. Residues 365–388 (AQGGDHAPAAQGGDPPPAASSGGH) are compositionally biased toward low complexity. The disordered stretch occupies residues 365–391 (AQGGDHAPAAQGGDPPPAASSGGHPLR).

It belongs to the UvrC family. As to quaternary structure, interacts with UvrB in an incision complex.

Its subcellular location is the cytoplasm. Its function is as follows. The UvrABC repair system catalyzes the recognition and processing of DNA lesions. UvrC both incises the 5' and 3' sides of the lesion. The N-terminal half is responsible for the 3' incision and the C-terminal half is responsible for the 5' incision. This Verminephrobacter eiseniae (strain EF01-2) protein is UvrABC system protein C.